The sequence spans 132 residues: Small ribosomal subunit protein uS8 (132 aa).

The protein belongs to the universal ribosomal protein uS8 family. Part of the 30S ribosomal subunit. Contacts proteins S5 and S12.

In terms of biological role, one of the primary rRNA binding proteins, it binds directly to 16S rRNA central domain where it helps coordinate assembly of the platform of the 30S subunit. The protein is Small ribosomal subunit protein uS8 of Bifidobacterium longum (strain NCC 2705).